A 332-amino-acid chain; its full sequence is HPr kinase/phosphorylase (332 aa).

Residues His153 and Lys174 contribute to the active site. An ATP-binding site is contributed by 168 to 175; it reads GKSGLGKS. Position 175 (Ser175) interacts with Mg(2+). Asp192 functions as the Proton acceptor; for phosphorylation activity. Proton donor; for dephosphorylation activity in the catalytic mechanism. An important for the catalytic mechanism of both phosphorylation and dephosphorylation region spans residues 217-226; it reads MEIRGLGVVD. Glu218 contributes to the Mg(2+) binding site. Arg259 is a catalytic residue. Positions 280–285 are important for the catalytic mechanism of dephosphorylation; sequence PIFPGK.

It belongs to the HPrK/P family. In terms of assembly, homohexamer. The cofactor is Mg(2+).

It catalyses the reaction [HPr protein]-L-serine + ATP = [HPr protein]-O-phospho-L-serine + ADP + H(+). The enzyme catalyses [HPr protein]-O-phospho-L-serine + phosphate + H(+) = [HPr protein]-L-serine + diphosphate. Functionally, catalyzes the ATP- as well as the pyrophosphate-dependent phosphorylation of a specific serine residue in HPr, a phosphocarrier protein of the phosphoenolpyruvate-dependent sugar phosphotransferase system (PTS). HprK/P also catalyzes the pyrophosphate-producing, inorganic phosphate-dependent dephosphorylation (phosphorolysis) of seryl-phosphorylated HPr (P-Ser-HPr). This chain is HPr kinase/phosphorylase, found in Chlorobium luteolum (strain DSM 273 / BCRC 81028 / 2530) (Pelodictyon luteolum).